The sequence spans 87 residues: Putative autophagy-related protein 8E (87 aa).

The segment covering 1-14 (MEERRKEKGKEGRR) has biased composition (basic and acidic residues). Positions 1 to 30 (MEERRKEKGKEGRRGKATGHSVDKFSRSNL) are disordered. A lipid anchor (Phosphatidylethanolamine amidated glycine) is attached at Gly-87.

This sequence belongs to the ATG8 family. As to quaternary structure, interacts with ATG4. The C-terminal Gly is amidated with phosphatidylethanolamine by an activating system similar to that for ubiquitin.

It localises to the cytoplasmic vesicle. Its subcellular location is the autophagosome membrane. The protein resides in the vacuole membrane. It is found in the cytoplasm. The protein localises to the cytoskeleton. Functionally, ubiquitin-like modifier involved in autophagosomes formation. May mediate the delivery of the autophagosomes to the vacuole via the microtubule cytoskeleton. This is Putative autophagy-related protein 8E (ATG8E) from Oryza sativa subsp. japonica (Rice).